Consider the following 511-residue polypeptide: Gap junction alpha-3 protein (511 aa).

An intramembrane segment occupies 2 to 15 (GDWSFLGRLLENAQ). Topologically, residues 16–19 (EHST) are cytoplasmic. A helical membrane pass occupies residues 20–40 (VIGKVWLTVLFIFRILVLGAA). At 41-71 (AEEVWGDEQSDFTCNTQQPGCENVCYDKAFP) the chain is on the extracellular side. Intrachain disulfides connect C54-C214, C61-C208, and C65-C203. A helical transmembrane segment spans residues 72 to 92 (ISHIRFWVLQIIFVSTPTLIY). The Cytoplasmic segment spans residues 93–174 (LGHVLHIVRM…GALLRTYIFN (82 aa)). Basic and acidic residues predominate over residues 110 to 119 (EEELKKRGSV). Residues 110 to 143 (EEELKKRGSVKDNNYPGAATSGGGSGGGNNFKDP) are disordered. The segment covering 129-138 (TSGGGSGGGN) has biased composition (gly residues). The chain crosses the membrane as a helical span at residues 175 to 195 (IIFKTLFEVGFIVGQYFLYGF). Topologically, residues 196–223 (ELKPVYQCSRPPCPHTVDCFISRPTEKT) are extracellular. A helical membrane pass occupies residues 224–244 (IFIIFMLVVASVSLLLNMLEI). The Cytoplasmic segment spans residues 245 to 511 (YHLGWKKLKQ…SRARSDDLAV (267 aa)). Residues 397 to 511 (AEQQGKAPSS…SRARSDDLAV (115 aa)) are disordered. Composition is skewed to low complexity over residues 403–415 (APSS…TPSS) and 440–456 (TTTN…ASGS).

Belongs to the connexin family. As to quaternary structure, a hemichannel or connexon is composed of a hexamer of connexins. A functional gap junction is formed by the apposition of two hemichannels. During early stages of lens development, interacts with the C-terminus of MIP. As to expression, detected in eye lens.

It is found in the cell membrane. The protein localises to the cell junction. It localises to the gap junction. Structural component of lens fiber gap junctions. Gap junctions are dodecameric channels that connect the cytoplasm of adjoining cells. They are formed by the docking of two hexameric hemichannels, one from each cell membrane. Small molecules and ions diffuse from one cell to a neighboring cell via the central pore. This is Gap junction alpha-3 protein (GJA3) from Gallus gallus (Chicken).